Reading from the N-terminus, the 219-residue chain is Peroxiredoxin-5, mitochondrial (219 aa).

Residues 1–57 constitute a mitochondrion transit peptide; that stretch reads MRLGWLRVLGCRPGSVVSRATIVEGASTTAAGTRGCLEGILEWTFGGVRGFRSAAVA. Positions 61–219 constitute a Thioredoxin domain; it reads IKVGDAIPSV…SLAPNILSQL (159 aa). Lys-80 is subject to N6-acetyllysine. Position 88 is an N6-acetyllysine; alternate (Lys-88). Lys-88 bears the N6-succinyllysine; alternate mark. The Cysteine sulfenic acid (-SOH) intermediate role is filled by Cys-105. A lipid anchor (S-palmitoyl cysteine) is attached at Cys-105. Cys-105 and Cys-209 are disulfide-bonded. N6-succinyllysine is present on Lys-121. Ser-187 is subject to Phosphoserine. Residues 217–219 carry the Microbody targeting signal motif; that stretch reads SQL.

This sequence belongs to the peroxiredoxin family. Prx5 subfamily. Monomer. S-palmitoylated. Palmitoylation occurs on the active site, inhibiting its reactivity; therefore PRDX5 palmitoylation status determines its antioxidant capacity. In terms of processing, S-palmitoylated. Depalmitoylated by ABHD10.

The protein resides in the mitochondrion. It is found in the cytoplasm. It localises to the peroxisome matrix. The enzyme catalyses a hydroperoxide + [thioredoxin]-dithiol = an alcohol + [thioredoxin]-disulfide + H2O. Thiol-specific peroxidase that catalyzes the reduction of hydrogen peroxide and organic hydroperoxides to water and alcohols, respectively. Plays a role in cell protection against oxidative stress by detoxifying peroxides and as sensor of hydrogen peroxide-mediated signaling events. The protein is Peroxiredoxin-5, mitochondrial (PRDX5) of Bos taurus (Bovine).